Here is a 273-residue protein sequence, read N- to C-terminus: 4-hydroxy-tetrahydrodipicolinate reductase (273 aa).

Residues Gly8 to Met13, Glu34, Gly102 to Thr104, and Ser128 to Met131 each bind NAD(+). His161 acts as the Proton donor/acceptor in catalysis. A (S)-2,3,4,5-tetrahydrodipicolinate-binding site is contributed by His162. The active-site Proton donor is the Lys165. Gly171–Thr172 is a binding site for (S)-2,3,4,5-tetrahydrodipicolinate.

This sequence belongs to the DapB family.

Its subcellular location is the cytoplasm. It carries out the reaction (S)-2,3,4,5-tetrahydrodipicolinate + NAD(+) + H2O = (2S,4S)-4-hydroxy-2,3,4,5-tetrahydrodipicolinate + NADH + H(+). The catalysed reaction is (S)-2,3,4,5-tetrahydrodipicolinate + NADP(+) + H2O = (2S,4S)-4-hydroxy-2,3,4,5-tetrahydrodipicolinate + NADPH + H(+). The protein operates within amino-acid biosynthesis; L-lysine biosynthesis via DAP pathway; (S)-tetrahydrodipicolinate from L-aspartate: step 4/4. Its function is as follows. Catalyzes the conversion of 4-hydroxy-tetrahydrodipicolinate (HTPA) to tetrahydrodipicolinate. The chain is 4-hydroxy-tetrahydrodipicolinate reductase from Methanosphaera stadtmanae (strain ATCC 43021 / DSM 3091 / JCM 11832 / MCB-3).